Here is a 1419-residue protein sequence, read N- to C-terminus: MSFEVGTRCWYPNSEAGWIGCEVTKNDFQDGTYHIELTSETGLVIPIETKHLESNNAMENNHEFLPVLRNPPILEATHDLTTLSYLNEPAVLHAIKERYNQRNIYTYSGIVLIATNPFDKVEELYSSEMIQAYARKNRDEMAPHIFAIAEEAYREMINNDQNQTIIVSGESGAGKTVSAKYIMRFFASVEEEHFNKEGDSKHQEEMSDIEVKILATNPVMEAFGNAKTTRNDNSSRFGKYLQILFDSNKNIIGSSIKTYLLERSRLVFQPTSERNYHIFYQMLSGLSSDMKKQLYLTNAEDFFYLNQGGESTINGIDDSLEYSTTIESLSTVGIDTEVQLQIFKILAALLHIGNIEIKKTRTDATLSSTDPSLQKACELLGLDPLTFSKWITKKQINTRSEKIISNLSFNQALVARDSVAKFIYSSLFDWLVGNINNVLCTSQVSETINSFIGVLDIYGFEHFEQNSFEQFCINYANEKLQQEFNHHVFKLEQEEYVKEEIEWSFIEFSDNQPCIDLIENKLGILSLLDEESRLPAGSDESWTTKLYQTFNKPPSNTVFGKPRFGQNKFIISHYAVDVTYEVDGFIEKNKDTISESQLEVLKATTNPTLATIFEFSEAENKTNITEQAGTIQRKTINRKPTLGSIFKRSLVELMETINSTNVHYIRCIKPNTEKEAWKFDNLMVLSQLRACGVLETIKISCAGFPSRWAFEEFIQRYYLLAPTDQWGRVTADMEMSLEDMVAFCDLILSEKIDSKDKYQIGKTKIFFKAGVLAYLEKIRSDKVTELAVLIQKHIRAKYYRSLYLQAMLSIKNCQSLIRGVQSRQRVDFEMKTDAATLLQTLHRSTRVRSQVFETLKNILEVQTAIRRVLVSNFIQREFESRSAIMIQSKIRANSPKHRYQTLKTGTILIQALVRRKQSQEKLKQLKIQAESAASLKNSAAGIQKELIGFIEELISNIKENDAKTTEYKSLLKHTSLPVVTGTNERTAAYISTKNQVEEDKVTIRTILTKYETLKDLCRKELKSLESLEKGVNDEKFASSLQSSLELIKRDISDLRINAIEKDNERTSTSSELKDGTDCTDNAVVQILTKRQGDLINDLVNVVFLEFQIPQRGRTKDCEHFYPVKLLISIVNLMNKFGLRKSSHSILKQTVQDLIGKISSMDAKKCVTFGLYWIISLHKLSSLPQEPAVLNKLQDKFYKTWLKQCFNQMKTVDSILILFDTISEFTLFFQGTTELLTNIITALLQHINAKWFNDLLIKQNTLSWTHGLEKDSEIKKVLDWCNSHKIRNSTEYLRNVNQACKLLQLRISNISDFQLVCEFCYDLSSLQMHALLTKYRPTQFEKPIPVDVLNHLSNTARRERTTMKRELTLDAGTETYSVENLFQGHPIEASDEHDDINQLINQLPSDKDFPVIKELGSLLA.

The Myosin N-terminal SH3-like domain maps to 4-57 (EVGTRCWYPNSEAGWIGCEVTKNDFQDGTYHIELTSETGLVIPIETKHLESNNA). A Myosin motor domain is found at 75 to 780 (EATHDLTTLS…VLAYLEKIRS (706 aa)). 169-176 (GESGAGKT) lines the ATP pocket. An actin-binding region spans residues 451-531 (FIGVLDIYGF…LGILSLLDEE (81 aa)). 6 IQ domains span residues 783 to 805 (VTEL…LYLQ), 806 to 830 (AMLS…DFEM), 831 to 854 (KTDA…VFET), 855 to 878 (LKNI…QREF), 879 to 901 (ESRS…RYQT), and 902 to 931 (LKTG…QAES). The stretch at 909-940 (IQALVRRKQSQEKLKQLKIQAESAASLKNSAA) forms a coiled coil. A non alpha-helical, tail domain region spans residues 1061–1419 (KDNERTSTSS…VIKELGSLLA (359 aa)). Residues 1143–1357 (HSILKQTVQD…LNHLSNTARR (215 aa)) form the Dilute domain.

The protein belongs to the TRAFAC class myosin-kinesin ATPase superfamily. Myosin family. In terms of assembly, homodimer. Interacts with calmodulin (CMD1) and the myosin light chain MLC1 through its IQ repeats.

In terms of biological role, myosin heavy chain that is required for the cell cycle-regulated transport of various organelles and proteins for their segregation. Functions by binding with its tail domain to receptor proteins on organelles and exerting force with its N-terminal motor domain against actin filaments, thereby transporting its cargo along polarized actin cables. This chain is Myosin-2B (MYO2B), found in Naumovozyma castellii (Yeast).